The chain runs to 917 residues: Auxin response factor 17 (917 aa).

The TF-B3 DNA-binding region spans 134–236; the sequence is FCKTLTASDT…QLLLGIRRAN (103 aa). The segment at 571 to 649 is disordered; it reads SVPNALSPFS…RPTAVPVPDP (79 aa). Composition is skewed to low complexity over residues 576–594 and 604–620; these read LSPF…MTLQ and SYPD…NTST. In terms of domain architecture, PB1 spans 786–870; it reads ATFVKVYKSG…SCIKILSPQE (85 aa).

The protein belongs to the ARF family. In terms of assembly, homodimers and heterodimers. In terms of tissue distribution, expressed in roots, culms, leaves and young panicles.

It localises to the nucleus. Functionally, auxin response factors (ARFs) are transcriptional factors that bind specifically to the DNA sequence 5'-TGTCTC-3' found in the auxin-responsive promoter elements (AuxREs). The polypeptide is Auxin response factor 17 (ARF17) (Oryza sativa subsp. japonica (Rice)).